Here is a 554-residue protein sequence, read N- to C-terminus: Serine/threonine-protein phosphatase 2B catalytic subunit (554 aa).

D119, H121, and D147 together coordinate Fe cation. 2 residues coordinate Zn(2+): D147 and N179. Catalysis depends on H180, which acts as the Proton donor. Residues H228 and H310 each contribute to the Zn(2+) site. The disordered stretch occupies residues 411–433 (LKESAPTQHKQPAPSENENKADQ). Over residues 415 to 426 (APTQHKQPAPSE) the composition is skewed to polar residues.

This sequence belongs to the PPP phosphatase family. PP-2B subfamily. As to quaternary structure, composed of two components (A and B), the A component is the catalytic subunit and the B component confers calcium sensitivity. The cofactor is Fe(3+). Zn(2+) is required as a cofactor.

It carries out the reaction O-phospho-L-seryl-[protein] + H2O = L-seryl-[protein] + phosphate. The enzyme catalyses O-phospho-L-threonyl-[protein] + H2O = L-threonyl-[protein] + phosphate. Functionally, calcium-dependent, calmodulin-stimulated protein phosphatase. This subunit may have a role in the calmodulin activation of calcineurin. Appears to be involved in cytokinesis, mating, transport, nuclear and spindle pole body positioning, and cell shape. In Schizosaccharomyces pombe (strain 972 / ATCC 24843) (Fission yeast), this protein is Serine/threonine-protein phosphatase 2B catalytic subunit (ppb1).